Reading from the N-terminus, the 417-residue chain is D-amino acid dehydrogenase (417 aa).

3–17 (AVVLGSGVVGLMSAW) provides a ligand contact to FAD.

This sequence belongs to the DadA oxidoreductase family. It depends on FAD as a cofactor.

It catalyses the reaction a D-alpha-amino acid + A + H2O = a 2-oxocarboxylate + AH2 + NH4(+). In terms of biological role, oxidative deamination of D-amino acids. The polypeptide is D-amino acid dehydrogenase (Vibrio vulnificus (strain CMCP6)).